The chain runs to 297 residues: N-acetylneuraminate lyase (297 aa).

Aceneuramate is bound by residues S47 and T48. The active-site Proton donor is Y137. The active-site Schiff-base intermediate with substrate is K165. Aceneuramate contacts are provided by T167, G189, D191, E192, and S208.

It belongs to the DapA family. NanA subfamily. Homotetramer.

It localises to the cytoplasm. It catalyses the reaction aceneuramate = aldehydo-N-acetyl-D-mannosamine + pyruvate. The protein operates within amino-sugar metabolism; N-acetylneuraminate degradation; D-fructose 6-phosphate from N-acetylneuraminate: step 1/5. Functionally, catalyzes the reversible aldol cleavage of N-acetylneuraminic acid (sialic acid; Neu5Ac) to form pyruvate and N-acetylmannosamine (ManNAc) via a Schiff base intermediate. The protein is N-acetylneuraminate lyase of Salmonella typhimurium (strain LT2 / SGSC1412 / ATCC 700720).